We begin with the raw amino-acid sequence, 884 residues long: Protein translocase subunit SecA (884 aa).

ATP contacts are provided by residues Gln83, 101-105, and Asp491; that span reads GEGKT.

Belongs to the SecA family.

The protein resides in the plastid. Its subcellular location is the chloroplast stroma. It is found in the chloroplast thylakoid membrane. It catalyses the reaction ATP + H2O + cellular proteinSide 1 = ADP + phosphate + cellular proteinSide 2.. In terms of biological role, has a central role in coupling the hydrolysis of ATP to the transfer of proteins across the thylakoid membrane. This is Protein translocase subunit SecA from Porphyra purpurea (Red seaweed).